The chain runs to 378 residues: Heterogeneous nuclear ribonucleoprotein A3 (378 aa).

Position 1 is an N-acetylmethionine (M1). The segment covering 1–10 (MEVKPPPGRP) has biased composition (pro residues). The disordered stretch occupies residues 1–34 (MEVKPPPGRPQPDSGRRRRRRGEEGHDPKEPEQL). A Glycyl lysine isopeptide (Lys-Gly) (interchain with G-Cter in SUMO2) cross-link involves residue K4. S14 bears the Phosphoserine mark. The segment covering 21–34 (RGEEGHDPKEPEQL) has biased composition (basic and acidic residues). The RRM 1 domain occupies 35–118 (RKLFIGGLSF…RAVSREDSVK (84 aa)). Residue K36 forms a Glycyl lysine isopeptide (Lys-Gly) (interchain with G-Cter in SUMO2) linkage. S43 is subject to Phosphoserine. Position 52 is a dimethylated arginine; alternate (R52). At R52 the chain carries Omega-N-methylarginine; alternate. The residue at position 76 (R76) is an Omega-N-methylarginine. Residues S112 and S116 each carry the phosphoserine modification. K118 participates in a covalent cross-link: Glycyl lysine isopeptide (Lys-Gly) (interchain with G-Cter in SUMO2). A Phosphothreonine modification is found at T124. Positions 126-205 (KKIFVGGIKE…CEVKKALSKQ (80 aa)) constitute an RRM 2 domain. K134 carries the post-translational modification N6-acetyllysine; alternate. Residue K134 forms a Glycyl lysine isopeptide (Lys-Gly) (interchain with G-Cter in SUMO2); alternate linkage. Glycyl lysine isopeptide (Lys-Gly) (interchain with G-Cter in SUMO2) cross-links involve residues K151 and K182. Positions 204–225 (KQEMQSAGSQRGRGGGSGNFMG) are disordered. R214, R216, R226, R239, and R246 each carry omega-N-methylarginine; alternate. Residues R214, R216, R226, R239, and R246 each carry the asymmetric dimethylarginine; alternate modification. A compositionally biased stretch (gly residues) spans 214–225 (RGRGGGSGNFMG). R257 carries the post-translational modification Omega-N-methylarginine. The residue at position 286 (R286) is an Asymmetric dimethylarginine. Residues 336–378 (SGQQQSNYGPMKGGSFGGRSSGSPYGGGYGSGGGSGGYGSRRF) are disordered. A compositionally biased stretch (gly residues) spans 346–378 (MKGGSFGGRSSGSPYGGGYGSGGGSGGYGSRRF). Phosphoserine is present on S350. Residue R354 is modified to Omega-N-methylarginine. Position 358 is a phosphoserine (S358). A phosphotyrosine mark is found at Y360 and Y364. A phosphoserine mark is found at S366 and S370. Y373 bears the Phosphotyrosine mark. S375 bears the Phosphoserine mark.

As to quaternary structure, identified in the spliceosome C complex.

It localises to the nucleus. Plays a role in cytoplasmic trafficking of RNA. Binds to the cis-acting response element, A2RE. May be involved in pre-mRNA splicing. The sequence is that of Heterogeneous nuclear ribonucleoprotein A3 (HNRNPA3) from Homo sapiens (Human).